Here is a 340-residue protein sequence, read N- to C-terminus: Myb-related protein Zm1 (340 aa).

HTH myb-type domains follow at residues 11–63 (KVGL…INYL) and 64–118 (RPDL…KKKV). DNA-binding regions (H-T-H motif) lie at residues 39–63 (WRAL…INYL) and 91–114 (WSKI…NTHL). The span at 116–126 (KKVAQREKKKA) shows a compositional bias: basic residues. Disordered stretches follow at residues 116-173 (KKVA…DATD) and 190-209 (DGAP…SSLT). Low complexity predominate over residues 133 to 166 (AGTPATAPLSSATSSTTTHNSSGGSDSGDQCGTS).

It localises to the nucleus. Transcription factor that positively regulates genes involved in anthocyanin biosynthesis such as A1. This Zea mays (Maize) protein is Myb-related protein Zm1.